Reading from the N-terminus, the 367-residue chain is Riboflavin biosynthesis protein VVA0006 (367 aa).

215–219 (RLHSE) lines the GTP pocket. 3 residues coordinate Zn(2+): cysteine 220, cysteine 231, and cysteine 233. GTP is bound by residues glutamine 236, 258-260 (EGR), and threonine 280. Residue aspartate 292 is the Proton acceptor of the active site. Catalysis depends on arginine 294, which acts as the Nucleophile. GTP is bound by residues threonine 315 and lysine 320.

In the N-terminal section; belongs to the YbiA family. This sequence in the C-terminal section; belongs to the GTP cyclohydrolase II family. Zn(2+) serves as cofactor.

The catalysed reaction is 2,5-diamino-6-hydroxy-4-(5-phosphoribosylamino)-pyrimidine + H2O = 2,5,6-triamino-4-hydroxypyrimidine + D-ribose 5-phosphate. The enzyme catalyses 5-amino-6-(5-phospho-D-ribosylamino)uracil + H2O = 5,6-diaminouracil + D-ribose 5-phosphate. It carries out the reaction GTP + 4 H2O = 2,5-diamino-6-hydroxy-4-(5-phosphoribosylamino)-pyrimidine + formate + 2 phosphate + 3 H(+). Its pathway is cofactor biosynthesis; riboflavin biosynthesis; 5-amino-6-(D-ribitylamino)uracil from GTP: step 1/4. Its function is as follows. Catalyzes the hydrolysis of the N-glycosidic bond in the first two intermediates of riboflavin biosynthesis, which are highly reactive metabolites, yielding relatively innocuous products. Thus, can divert a surplus of harmful intermediates into relatively harmless products and pre-empt the damage these intermediates would otherwise do. Has no activity against GTP, nucleoside monophosphates or ADP-ribose. Catalyzes the conversion of GTP to 2,5-diamino-6-ribosylamino-4(3H)-pyrimidinone 5'-phosphate (DARP), formate and pyrophosphate. The sequence is that of Riboflavin biosynthesis protein VVA0006 from Vibrio vulnificus (strain YJ016).